We begin with the raw amino-acid sequence, 559 residues long: Putative protease Do-like 3, mitochondrial (559 aa).

The transit peptide at 1-48 (MSFLCVRTVSRFRSLSRALAPGFLLLHGNAVPKTAVFFRQQSSNTRLF) directs the protein to the mitochondrion. The interval 59-81 (ENNSKSALKNKLPPGKEVSSKDA) is disordered. Residues 100–292 (VFTVSSKPRL…FLNAIEESGE (193 aa)) are serine protease. Residues His138, Asp169, and Ser247 each act as charge relay system in the active site. Residues 300–380 (NLTYQKMDND…HLVSMKKPCE (81 aa)) enclose the PDZ domain. Residues 538–559 (SEDLQPKQQNKRSKVPPKSKEH) are disordered. A compositionally biased stretch (basic residues) spans 546-559 (QNKRSKVPPKSKEH).

Belongs to the peptidase S1C family.

The protein localises to the mitochondrion matrix. Its function is as follows. Putative serine protease. This is Putative protease Do-like 3, mitochondrial (DEGP3) from Arabidopsis thaliana (Mouse-ear cress).